Reading from the N-terminus, the 257-residue chain is Phosphonates import ATP-binding protein PhnC (257 aa).

One can recognise an ABC transporter domain in the interval 2–246 (IEFRNVSKVY…KFAEIYGDVA (245 aa)). 35-42 (GLSGAGKS) contacts ATP.

It belongs to the ABC transporter superfamily. Phosphonates importer (TC 3.A.1.9.1) family. In terms of assembly, the complex is composed of two ATP-binding proteins (PhnC), two transmembrane proteins (PhnE) and a solute-binding protein (PhnD).

The protein localises to the cell membrane. The enzyme catalyses phosphonate(out) + ATP + H2O = phosphonate(in) + ADP + phosphate + H(+). Its function is as follows. Part of the ABC transporter complex PhnCDE involved in phosphonates import. Responsible for energy coupling to the transport system. This Bacillus thuringiensis subsp. konkukian (strain 97-27) protein is Phosphonates import ATP-binding protein PhnC.